We begin with the raw amino-acid sequence, 367 residues long: DNA polymerase IV (367 aa).

A UmuC domain is found at isoleucine 14–glycine 198. Mg(2+) contacts are provided by aspartate 18 and aspartate 116. The active site involves glutamate 117.

It belongs to the DNA polymerase type-Y family. In terms of assembly, monomer. Mg(2+) is required as a cofactor.

It localises to the cytoplasm. It catalyses the reaction DNA(n) + a 2'-deoxyribonucleoside 5'-triphosphate = DNA(n+1) + diphosphate. In terms of biological role, poorly processive, error-prone DNA polymerase involved in untargeted mutagenesis. Copies undamaged DNA at stalled replication forks, which arise in vivo from mismatched or misaligned primer ends. These misaligned primers can be extended by PolIV. Exhibits no 3'-5' exonuclease (proofreading) activity. May be involved in translesional synthesis, in conjunction with the beta clamp from PolIII. The polypeptide is DNA polymerase IV (Streptococcus thermophilus (strain CNRZ 1066)).